The following is a 336-amino-acid chain: Tetraacyldisaccharide 4'-kinase (336 aa).

58–65 (AVGGSGKT) serves as a coordination point for ATP.

This sequence belongs to the LpxK family.

It catalyses the reaction a lipid A disaccharide + ATP = a lipid IVA + ADP + H(+). The protein operates within glycolipid biosynthesis; lipid IV(A) biosynthesis; lipid IV(A) from (3R)-3-hydroxytetradecanoyl-[acyl-carrier-protein] and UDP-N-acetyl-alpha-D-glucosamine: step 6/6. Transfers the gamma-phosphate of ATP to the 4'-position of a tetraacyldisaccharide 1-phosphate intermediate (termed DS-1-P) to form tetraacyldisaccharide 1,4'-bis-phosphate (lipid IVA). This is Tetraacyldisaccharide 4'-kinase from Aromatoleum aromaticum (strain DSM 19018 / LMG 30748 / EbN1) (Azoarcus sp. (strain EbN1)).